Here is a 1197-residue protein sequence, read N- to C-terminus: PAN2-PAN3 deadenylation complex catalytic subunit PAN2 (1197 aa).

WD repeat units lie at residues 153 to 193 (DEAE…QKYT), 195 to 231 (EVPG…VEHE), 244 to 280 (VHGN…ATTP), and 328 to 367 (TVGP…TFNT). The segment at 368-485 (YSRETDFALP…IGREEEPHLY (118 aa)) is linker. The USP domain maps to 486 to 919 (MVAKKYRKVT…VPAILYYARR (434 aa)). The Exonuclease domain occupies 970-1142 (VGLDAEFVTL…EDARTALQLY (173 aa)). Residues aspartate 973, glutamate 975, aspartate 1082, and aspartate 1134 each contribute to the a divalent metal cation site. A disordered region spans residues 1176-1197 (VPEPDSQSSPKHGAVFPPVLAL).

The protein belongs to the peptidase C19 family. PAN2 subfamily. In terms of assembly, forms a heterotrimer with an asymmetric homodimer of the regulatory subunit PAN3 to form the poly(A)-nuclease (PAN) deadenylation complex. The cofactor is a divalent metal cation.

It localises to the cytoplasm. The protein localises to the P-body. The protein resides in the nucleus. The catalysed reaction is Exonucleolytic cleavage of poly(A) to 5'-AMP.. With respect to regulation, positively regulated by the regulatory subunit PAN3. Its function is as follows. Catalytic subunit of the poly(A)-nuclease (PAN) deadenylation complex, one of two cytoplasmic mRNA deadenylases involved in general and miRNA-mediated mRNA turnover. PAN specifically shortens poly(A) tails of RNA and the activity is stimulated by poly(A)-binding protein (PABP). PAN deadenylation is followed by rapid degradation of the shortened mRNA tails by the CCR4-NOT complex. Deadenylated mRNAs are then degraded by two alternative mechanisms, namely exosome-mediated 3'-5' exonucleolytic degradation, or deadenylation-dependent mRNA decaping and subsequent 5'-3' exonucleolytic degradation by XRN1. The sequence is that of PAN2-PAN3 deadenylation complex catalytic subunit PAN2 from Gallus gallus (Chicken).